Reading from the N-terminus, the 807-residue chain is Dual specificity protein phosphatase PPS1 (807 aa).

Residues 585–783 form the Tyrosine-protein phosphatase domain; the sequence is LPSRILRHLY…LFKWWKKHYN (199 aa). Residues 593–807 form a catalytic region; that stretch reads LYLGSLDHAQ…GIAEVNMKYT (215 aa). The active-site Phosphocysteine intermediate is the Cys725.

Belongs to the protein-tyrosine phosphatase family. Non-receptor class dual specificity subfamily.

The enzyme catalyses O-phospho-L-tyrosyl-[protein] + H2O = L-tyrosyl-[protein] + phosphate. It catalyses the reaction O-phospho-L-seryl-[protein] + H2O = L-seryl-[protein] + phosphate. It carries out the reaction O-phospho-L-threonyl-[protein] + H2O = L-threonyl-[protein] + phosphate. In terms of biological role, protein phosphatase with specificity for serine, threonine, and tyrosine residues; has a role in the DNA synthesis phase of the cell cycle. This is Dual specificity protein phosphatase PPS1 (PPS1) from Saccharomyces cerevisiae (strain ATCC 204508 / S288c) (Baker's yeast).